The following is a 309-amino-acid chain: MDYVRTQVEAVFDDSEQDGSTISESGSCDSSSDRSFADELGLMELLEGDKAHDLIYRNCKSGLGDQCQILSVLRNGFRNVGSRAKLKTFQVFQEAVQMKHGGDGGAKVKYGWCSVSKHELKTIFEYGFSEPLRNDGSFGRGLYLSPDNSPLDCLKDSASESEDGMRFLLLCRVLLGKSEIVPQGSTRSCPSSPEFDSGVDDLVSTKKYIVWSTHMNTHVLPEFLVCIKAPFNLTRSPKRLRSPWMAFPVLIKALSKFLPPSQILVIQKHYKDQQNRRITRSELIQRVRSITGDKLLVHIIKACGHKVQH.

The PARP catalytic domain maps to 28–255; the sequence is CDSSSDRSFA…AFPVLIKALS (228 aa). The RST domain occupies 238–309; that stretch reads KRLRSPWMAF…IKACGHKVQH (72 aa).

Interacts with dehydration-responsive DREB2 proteins and a number of transcription factors belonging to several protein families.

The protein localises to the nucleus matrix. Functionally, probable inactive ADP-ribosyltransferase that may be involved in stress and developmental responses. This is Probable inactive poly [ADP-ribose] polymerase SRO5 (SRO5) from Arabidopsis thaliana (Mouse-ear cress).